The primary structure comprises 397 residues: MNFNKKTIEDVQVKGKKVLVRCDFNVPLKDGVITDENRLNGAMPTIKYLVDNGAQVILCSHMGKPKGEAKPEFSLAPVAKRLSEMLGKEVVFAADDNVVGENAKKAVAEMKDGDVVLLQNTRYRKEETKNGEELSKELASLAEMFVNDAFGTAHRAHCSTVGVTEYLKPAVCGYLIQKELKFLGDAVETPERPFVAILGGAKVSDKINVINNLLEKVDTLIIGGGMAYTFLKAQGYTVGSSLVEEDKVEYAKEMLAKAEEKGVKLLLPVDHRVAKEFKDVEAVVTEDQNIAEGFMGLDIGPKTEAIYAEAIKDAKTVIWNGPMGVFEFENFNKGTIAVAKAMAEADATTIIGGGDSAAAVNILGFGDKMSHISTGGGASLEFLEGKVLPGIAALNDK.

Substrate-binding positions include 23–25 (DFN), arginine 38, 61–64 (HMGK), arginine 122, and arginine 155. Residues lysine 206, glycine 296, glutamate 327, and 353-356 (GGDS) each bind ATP.

Belongs to the phosphoglycerate kinase family. In terms of assembly, monomer.

The protein localises to the cytoplasm. The enzyme catalyses (2R)-3-phosphoglycerate + ATP = (2R)-3-phospho-glyceroyl phosphate + ADP. It participates in carbohydrate degradation; glycolysis; pyruvate from D-glyceraldehyde 3-phosphate: step 2/5. This chain is Phosphoglycerate kinase, found in Clostridium perfringens (strain SM101 / Type A).